The chain runs to 987 residues: Phosphatidylethanolamine N-methyltransferase (987 aa).

Polar residues-rich tracts occupy residues 1–12 (MSTSSMKSQDSN) and 19–28 (NNGSATNDDN). The segment at 1–56 (MSTSSMKSQDSNGLRERINNGSATNDDNMTARCGSEPPSEDFELDKDKKTFGRTPD) is disordered. Residues 1–83 (MSTSSMKSQD…DPRQPKNLSD (83 aa)) lie on the Lumenal side of the membrane. Residues 84–104 (LIVLVILALHIFALYALPSSL) traverse the membrane as a helical segment. At 105-107 (KRP) the chain is on the cytoplasmic side. A helical membrane pass occupies residues 108–128 (VFAVIFLFWRGCYNVGIGYLL). The Lumenal portion of the chain corresponds to 129 to 193 (HIQSHHKRIV…EYNTWLVFRR (65 aa)). A helical membrane pass occupies residues 194 to 214 (VVDLILMCDFTSYCLFAIACG). Over 215–221 (GAPSDEG) the chain is Cytoplasmic. The helical transmembrane segment at 222–242 (LVMSTLRWGAGIILVLFNLWV) threads the bilayer. Residues 243-271 (KLDAHRVVKDYAWYWGDFFYLIDQELTFD) are Lumenal-facing. The chain crosses the membrane as a helical span at residues 272 to 292 (GVFEMAPHPMYSVGYAGYYGI). The Cytoplasmic segment spans residues 293–298 (SMMAAS). A helical transmembrane segment spans residues 299–319 (YSVLAISIVAHMAQFAFLLVV). Topologically, residues 320–393 (ENPHIDKTYN…MGLGNIDLFR (74 aa)) are lumenal. The interval 327-348 (TYNPPPPRKHQDNPTPSDIDHA) is disordered. Residues 394-414 (ITDVSILLLLGYVFLITALTP) form a helical membrane-spanning segment. Topologically, residues 415 to 421 (STPVYQA) are cytoplasmic. Residues 422–442 (LFVINAMFWRLWYSVGLGIIL) form a helical membrane-spanning segment. At 443–483 (DRQSSKKMWTRHFVKYGDSTEEAWRQWKGMYHLSMTMCYAS) the chain is on the lumenal side. Residues 484–504 (FIAATWKMYSIPSDWAYGLVL) form a helical membrane-spanning segment. At 505-507 (LRH) the chain is on the cytoplasmic side. The helical transmembrane segment at 508–528 (VLGAGLVSLQLWTAISIYESL) threads the bilayer. Topologically, residues 529 to 560 (GEFGWFFGDFFFDHAPKLTYSGIYRYLNNPER) are lumenal. The helical transmembrane segment at 561–581 (IIGLAGIWGAVFITGSRAIFC) threads the bilayer. At 582–987 (LALLSHTLTL…NTPDVDGEKA (406 aa)) the chain is on the cytoplasmic side.

The protein belongs to the class VI-like SAM-binding methyltransferase superfamily. CHO2 family.

It is found in the endoplasmic reticulum membrane. The catalysed reaction is a 1,2-diacyl-sn-glycero-3-phosphoethanolamine + S-adenosyl-L-methionine = a 1,2-diacyl-sn-glycero-3-phospho-N-methylethanolamine + S-adenosyl-L-homocysteine + H(+). It functions in the pathway phospholipid metabolism; phosphatidylcholine biosynthesis. Catalyzes the first step of the methylation pathway of phosphatidylcholine biosynthesis, the SAM-dependent methylation of phosphatidylethanolamine (PE) to phosphatidylmonomethylethanolamine (PMME). This is Phosphatidylethanolamine N-methyltransferase (CHO2) from Botryotinia fuckeliana (strain B05.10) (Noble rot fungus).